The chain runs to 457 residues: Bifunctional protein GlmU (457 aa).

A pyrophosphorylase region spans residues 1-230 (MPLSLPLHIV…AREVEGVNDL (230 aa)). UDP-N-acetyl-alpha-D-glucosamine contacts are provided by residues 12 to 15 (LAAG), Lys-26, Gln-78, 83 to 84 (GT), 105 to 107 (YGD), Gly-140, Glu-155, Asn-170, and Asn-228. Asp-107 provides a ligand contact to Mg(2+). Position 228 (Asn-228) interacts with Mg(2+). Residues 231–251 (WQLTQLERAWQIRAARALCLQ) are linker. The segment at 252 to 457 (GARVADPARL…DSWQRPKKKT (206 aa)) is N-acetyltransferase. Residues Arg-334 and Lys-352 each contribute to the UDP-N-acetyl-alpha-D-glucosamine site. His-364 (proton acceptor) is an active-site residue. Positions 367 and 378 each coordinate UDP-N-acetyl-alpha-D-glucosamine. Acetyl-CoA-binding positions include Ala-381, 387–388 (NY), Ser-406, Ala-424, and Arg-441.

This sequence in the N-terminal section; belongs to the N-acetylglucosamine-1-phosphate uridyltransferase family. In the C-terminal section; belongs to the transferase hexapeptide repeat family. As to quaternary structure, homotrimer. Requires Mg(2+) as cofactor.

It is found in the cytoplasm. It catalyses the reaction alpha-D-glucosamine 1-phosphate + acetyl-CoA = N-acetyl-alpha-D-glucosamine 1-phosphate + CoA + H(+). The catalysed reaction is N-acetyl-alpha-D-glucosamine 1-phosphate + UTP + H(+) = UDP-N-acetyl-alpha-D-glucosamine + diphosphate. The protein operates within nucleotide-sugar biosynthesis; UDP-N-acetyl-alpha-D-glucosamine biosynthesis; N-acetyl-alpha-D-glucosamine 1-phosphate from alpha-D-glucosamine 6-phosphate (route II): step 2/2. Its pathway is nucleotide-sugar biosynthesis; UDP-N-acetyl-alpha-D-glucosamine biosynthesis; UDP-N-acetyl-alpha-D-glucosamine from N-acetyl-alpha-D-glucosamine 1-phosphate: step 1/1. It functions in the pathway bacterial outer membrane biogenesis; LPS lipid A biosynthesis. Catalyzes the last two sequential reactions in the de novo biosynthetic pathway for UDP-N-acetylglucosamine (UDP-GlcNAc). The C-terminal domain catalyzes the transfer of acetyl group from acetyl coenzyme A to glucosamine-1-phosphate (GlcN-1-P) to produce N-acetylglucosamine-1-phosphate (GlcNAc-1-P), which is converted into UDP-GlcNAc by the transfer of uridine 5-monophosphate (from uridine 5-triphosphate), a reaction catalyzed by the N-terminal domain. This chain is Bifunctional protein GlmU, found in Xylella fastidiosa (strain 9a5c).